The primary structure comprises 269 residues: Chymotrypsin-like elastase family member 2B (269 aa).

The first 16 residues, 1–16, serve as a signal peptide directing secretion; sequence MIRTLLLSTLVAGALS. A propeptide spans 17–28 (activation peptide); that stretch reads CGVSTYAPDMSR. The 239-residue stretch at 29 to 267 folds into the Peptidase S1 domain; that stretch reads MLGGEEARPN…YNDWINSVIA (239 aa). Cysteines 58 and 74 form a disulfide. Active-site charge relay system residues include H73 and D121. 3 disulfide bridges follow: C155–C222, C186–C202, and C212–C243. S216 (charge relay system) is an active-site residue.

The protein belongs to the peptidase S1 family. Elastase subfamily. Pancreas.

Its subcellular location is the secreted. The catalysed reaction is Preferential cleavage: Leu-|-Xaa, Met-|-Xaa and Phe-|-Xaa. Hydrolyzes elastin.. In terms of biological role, acts upon elastin. This Homo sapiens (Human) protein is Chymotrypsin-like elastase family member 2B (CELA2B).